Consider the following 179-residue polypeptide: Large ribosomal subunit protein uL5 (179 aa).

The protein belongs to the universal ribosomal protein uL5 family. Part of the 50S ribosomal subunit; part of the 5S rRNA/L5/L18/L25 subcomplex. Contacts the 5S rRNA and the P site tRNA. Forms a bridge to the 30S subunit in the 70S ribosome.

Functionally, this is one of the proteins that bind and probably mediate the attachment of the 5S RNA into the large ribosomal subunit, where it forms part of the central protuberance. In the 70S ribosome it contacts protein S13 of the 30S subunit (bridge B1b), connecting the 2 subunits; this bridge is implicated in subunit movement. Contacts the P site tRNA; the 5S rRNA and some of its associated proteins might help stabilize positioning of ribosome-bound tRNAs. In Francisella philomiragia subsp. philomiragia (strain ATCC 25017 / CCUG 19701 / FSC 153 / O#319-036), this protein is Large ribosomal subunit protein uL5.